A 394-amino-acid polypeptide reads, in one-letter code: Protein TsgA homolog (394 aa).

12 helical membrane passes run 11–31 (WISYFSYALTGALVIVTGMVM), 51–71 (FLNAGILISIFLNAWLMEIIP), 76–96 (LMFGFVLMVLAIAGLMLGKSL), 101–121 (LCMFILGVVSGITMSIGTFLI), 134–154 (LLFTDSFFSMAGMIFPIVAAM), 162–182 (WYWVYACIGLLYVGIFVLTLF), 206–226 (IGVLFLSIAALCYILGQLGFI), 251–271 (FWTSYMIGMWVFSFILRFFDL), 274–294 (IVTILAALATGAMYLFVSTDN), 302–322 (IMALGFVSSAIYTTLITLGSL), 334–354 (FILTCGTIGTMLTFVVTGPIV), and 363–383 (LTTANGLYLAVFVMCLLLGFV).

This sequence belongs to the major facilitator superfamily. TsgA family.

It is found in the cell inner membrane. The chain is Protein TsgA homolog from Serratia proteamaculans (strain 568).